A 189-amino-acid chain; its full sequence is Small ribosomal subunit protein uS5 (189 aa).

An S5 DRBM domain is found at 20–83 (FVDRLVHINR…ESAKRALIRV (64 aa)).

The protein belongs to the universal ribosomal protein uS5 family. Part of the 30S ribosomal subunit. Contacts proteins S4 and S8.

Functionally, with S4 and S12 plays an important role in translational accuracy. In terms of biological role, located at the back of the 30S subunit body where it stabilizes the conformation of the head with respect to the body. The chain is Small ribosomal subunit protein uS5 from Beijerinckia indica subsp. indica (strain ATCC 9039 / DSM 1715 / NCIMB 8712).